The primary structure comprises 1010 residues: Probable LRR receptor-like serine/threonine-protein kinase At3g47570 (1010 aa).

The first 19 residues, 1 to 19 (MRLFLLLAFNALMLLETHG), serve as a signal peptide directing secretion. Residues 20-645 (FTDETDRQAL…SSRLKKVVIG (626 aa)) lie on the Extracellular side of the membrane. N-linked (GlcNAc...) asparagine glycosylation is found at Asn-48 and Asn-88. LRR repeat units lie at residues 89-113 (LSFL…VGQL), 114-137 (SRLE…LYNC), 139-161 (RLLN…LGSL), 162-185 (TNLV…LGNL), 186-209 (TLLE…VAQL), 211-233 (QIWS…LYNL), 234-258 (SSLK…GILL), 259-282 (PNLL…LSNI), 283-307 (STLE…NVPN), and 310-333 (LLFL…TSLT). Residue Asn-136 is glycosylated (N-linked (GlcNAc...) asparagine). Asn-184 carries N-linked (GlcNAc...) asparagine glycosylation. 2 N-linked (GlcNAc...) asparagine glycosylation sites follow: Asn-221 and Asn-232. N-linked (GlcNAc...) asparagine glycans are attached at residues Asn-281 and Asn-294. Residues Asn-334 and Asn-358 are each glycosylated (N-linked (GlcNAc...) asparagine). 11 LRR repeats span residues 335–359 (CTQL…IANL), 361–384 (AKLV…IGNL), 385–408 (INLQ…LGKL), 410–432 (NLRY…IGNM), 433–455 (TMLE…SLGN), 457–480 (SHLL…IMKI), 481–504 (QQLL…IGAL), 505–528 (QNLG…LGNC), 530–551 (TMES…LKGL), 552–574 (VGVK…YFAS), and 575–600 (FSKL…IFEN). Asn-431, Asn-455, and Asn-470 each carry an N-linked (GlcNAc...) asparagine glycan. 2 N-linked (GlcNAc...) asparagine glycosylation sites follow: Asn-582 and Asn-600. A helical membrane pass occupies residues 646-666 (VSVGITLLLLLFMASVTLIWL). Residues 667–1010 (RKRKKNKETN…FFKASRTTWR (344 aa)) lie on the Cytoplasmic side of the membrane. Thr-699 is modified (phosphothreonine). Residues 702–1002 (FSSSNMVGSG…ELISIRERFF (301 aa)) enclose the Protein kinase domain. ATP contacts are provided by residues 708–716 (VGSGSFGTV) and Lys-731. Tyr-781 and Tyr-826 each carry phosphotyrosine. Asp-839 (proton acceptor) is an active-site residue. Tyr-887 is modified (phosphotyrosine).

Belongs to the protein kinase superfamily. Ser/Thr protein kinase family.

The protein localises to the cell membrane. The catalysed reaction is L-seryl-[protein] + ATP = O-phospho-L-seryl-[protein] + ADP + H(+). It carries out the reaction L-threonyl-[protein] + ATP = O-phospho-L-threonyl-[protein] + ADP + H(+). This chain is Probable LRR receptor-like serine/threonine-protein kinase At3g47570, found in Arabidopsis thaliana (Mouse-ear cress).